Consider the following 269-residue polypeptide: 4-hydroxy-tetrahydrodipicolinate reductase (269 aa).

Position 11–16 (11–16) interacts with NAD(+); that stretch reads GPIGRM. Lys-39 serves as a coordination point for NADP(+). NAD(+) contacts are provided by residues 101 to 103 and 125 to 128; these read GTT and ASNF. The active-site Proton donor/acceptor is His-158. (S)-2,3,4,5-tetrahydrodipicolinate is bound at residue His-159. Residue Lys-162 is the Proton donor of the active site. Position 168 to 169 (168 to 169) interacts with (S)-2,3,4,5-tetrahydrodipicolinate; the sequence is GT.

This sequence belongs to the DapB family. Homotetramer.

The protein localises to the cytoplasm. It catalyses the reaction (S)-2,3,4,5-tetrahydrodipicolinate + NAD(+) + H2O = (2S,4S)-4-hydroxy-2,3,4,5-tetrahydrodipicolinate + NADH + H(+). It carries out the reaction (S)-2,3,4,5-tetrahydrodipicolinate + NADP(+) + H2O = (2S,4S)-4-hydroxy-2,3,4,5-tetrahydrodipicolinate + NADPH + H(+). It functions in the pathway amino-acid biosynthesis; L-lysine biosynthesis via DAP pathway; (S)-tetrahydrodipicolinate from L-aspartate: step 4/4. Catalyzes the conversion of 4-hydroxy-tetrahydrodipicolinate (HTPA) to tetrahydrodipicolinate. The protein is 4-hydroxy-tetrahydrodipicolinate reductase of Buchnera aphidicola subsp. Acyrthosiphon pisum (strain Tuc7).